A 315-amino-acid polypeptide reads, in one-letter code: 1-aminocyclopropane-1-carboxylate oxidase 1 (315 aa).

A Fe2OG dioxygenase domain is found at 153–253 (PNFGTKVSNY…RMSLASFYNP (101 aa)). Positions 177, 179, and 234 each coordinate Fe cation.

It belongs to the iron/ascorbate-dependent oxidoreductase family. Fe cation is required as a cofactor. Predominantly expressed in the petals and the stigma and style.

It catalyses the reaction 1-aminocyclopropane-1-carboxylate + L-ascorbate + O2 = ethene + L-dehydroascorbate + hydrogen cyanide + CO2 + 2 H2O. It functions in the pathway alkene biosynthesis; ethylene biosynthesis via S-adenosyl-L-methionine; ethylene from S-adenosyl-L-methionine: step 2/2. The chain is 1-aminocyclopropane-1-carboxylate oxidase 1 (ACO1) from Solanum lycopersicum (Tomato).